Reading from the N-terminus, the 619-residue chain is Pescadillo homolog (619 aa).

A disordered region spans residues 303-324 (ADKDQKDQDTIEDAEEVTEPTV). Over residues 312–324 (TIEDAEEVTEPTV) the composition is skewed to acidic residues. Residues 353 to 452 (PTSQLFSKFI…ELVSVGDYAP (100 aa)) enclose the BRCT domain. A disordered region spans residues 456–567 (LPPHLSPWGD…STKAALTPEE (112 aa)). Coiled coils occupy residues 472-560 (NAKA…ASTK) and 588-619 (MQYG…LKDV). Over residues 480–522 (EAEEEEEEEEEDEEEEEEEEEIEVADGDEDQDDEEEEEIEDED) the composition is skewed to acidic residues. The segment covering 523 to 539 (LKAQKELEMEVAGKKFS) has biased composition (basic and acidic residues).

This sequence belongs to the pescadillo family. In terms of assembly, component of the NOP7 complex, composed of ERB1, NOP7 and YTM1. The complex is held together by ERB1, which interacts with NOP7 via its N-terminal domain and with YTM1 via a high-affinity interaction between the seven-bladed beta-propeller domains of the 2 proteins. The NOP7 complex associates with the 66S pre-ribosome.

It localises to the nucleus. The protein localises to the nucleolus. Its subcellular location is the nucleoplasm. Functionally, component of the NOP7 complex, which is required for maturation of the 25S and 5.8S ribosomal RNAs and formation of the 60S ribosome. The protein is Pescadillo homolog of Lodderomyces elongisporus (strain ATCC 11503 / CBS 2605 / JCM 1781 / NBRC 1676 / NRRL YB-4239) (Yeast).